Reading from the N-terminus, the 862-residue chain is Protein translocase subunit SecA (862 aa).

Residues Gln88, 106–110, and Asp506 contribute to the ATP site; that span reads GEGKT. The Zn(2+) site is built by Cys839, Cys841, Cys850, and His851.

Belongs to the SecA family. As to quaternary structure, monomer and homodimer. Part of the essential Sec protein translocation apparatus which comprises SecA, SecYEG and auxiliary proteins SecDF-YajC and YidC. Requires Zn(2+) as cofactor.

It localises to the cell inner membrane. Its subcellular location is the cytoplasm. It carries out the reaction ATP + H2O + cellular proteinSide 1 = ADP + phosphate + cellular proteinSide 2.. Functionally, part of the Sec protein translocase complex. Interacts with the SecYEG preprotein conducting channel. Has a central role in coupling the hydrolysis of ATP to the transfer of proteins into and across the cell membrane, serving as an ATP-driven molecular motor driving the stepwise translocation of polypeptide chains across the membrane. In Campylobacter jejuni subsp. jejuni serotype O:2 (strain ATCC 700819 / NCTC 11168), this protein is Protein translocase subunit SecA.